Reading from the N-terminus, the 239-residue chain is 4-hydroxy-tetrahydrodipicolinate reductase (239 aa).

Residues 9 to 14 (GINGKI), 78 to 80 (GTT), and 104 to 107 (APNF) contribute to the NAD(+) site. The Proton donor/acceptor role is filled by His134. His135 lines the (S)-2,3,4,5-tetrahydrodipicolinate pocket. The Proton donor role is filled by Lys138. A (S)-2,3,4,5-tetrahydrodipicolinate-binding site is contributed by 144-145 (GT).

This sequence belongs to the DapB family.

The protein localises to the cytoplasm. It catalyses the reaction (S)-2,3,4,5-tetrahydrodipicolinate + NAD(+) + H2O = (2S,4S)-4-hydroxy-2,3,4,5-tetrahydrodipicolinate + NADH + H(+). The enzyme catalyses (S)-2,3,4,5-tetrahydrodipicolinate + NADP(+) + H2O = (2S,4S)-4-hydroxy-2,3,4,5-tetrahydrodipicolinate + NADPH + H(+). It functions in the pathway amino-acid biosynthesis; L-lysine biosynthesis via DAP pathway; (S)-tetrahydrodipicolinate from L-aspartate: step 4/4. Catalyzes the conversion of 4-hydroxy-tetrahydrodipicolinate (HTPA) to tetrahydrodipicolinate. In Coxiella burnetii (strain CbuG_Q212) (Coxiella burnetii (strain Q212)), this protein is 4-hydroxy-tetrahydrodipicolinate reductase.